We begin with the raw amino-acid sequence, 252 residues long: MIVFLLKRILLLYLIFFVPKSFSENLPFFKIKSYSEKKEFFQNDNEKVGYSLGVSLGNYVNESFERQKKMGINLDKYNILLGVQDAISGNLKLSNEEISTILQKLEKNLKNAAKIEFEKSEKENLIQGKLYMKKFSEMKGVSKTSSGLLYIIDKLGEGEEIKTKNAEITVHYKGSLINGTEFDSSYKRGKPITLMLKDVILGWQEGLKYIKKGGKIKLIIPPNLGYGSNRINEIPANSILIFDIELLDIKNI.

The PPIase FKBP-type domain occupies 165 to 252 (NAEITVHYKG…DIELLDIKNI (88 aa)).

This sequence belongs to the FKBP-type PPIase family.

It carries out the reaction [protein]-peptidylproline (omega=180) = [protein]-peptidylproline (omega=0). PPIases accelerate the folding of proteins. It catalyzes the cis-trans isomerization of proline imidic peptide bonds in oligopeptides. In Buchnera aphidicola subsp. Schizaphis graminum (strain Sg), this protein is FKBP-type peptidyl-prolyl cis-trans isomerase FkpA (fkpA).